A 349-amino-acid polypeptide reads, in one-letter code: Aminomethyltransferase (349 aa).

This sequence belongs to the GcvT family. As to quaternary structure, the glycine cleavage system is composed of four proteins: P, T, L and H.

It catalyses the reaction N(6)-[(R)-S(8)-aminomethyldihydrolipoyl]-L-lysyl-[protein] + (6S)-5,6,7,8-tetrahydrofolate = N(6)-[(R)-dihydrolipoyl]-L-lysyl-[protein] + (6R)-5,10-methylene-5,6,7,8-tetrahydrofolate + NH4(+). In terms of biological role, the glycine cleavage system catalyzes the degradation of glycine. This chain is Aminomethyltransferase, found in Thermus thermophilus (strain ATCC BAA-163 / DSM 7039 / HB27).